A 218-amino-acid chain; its full sequence is Ras-related protein Rab11D (218 aa).

Gly-20–Ser-27 contributes to the GTP binding site. Residues Ser-42–Phe-50 carry the Effector region motif. GTP-binding positions include Asp-68–Gln-72 and Asn-126–Asp-129. S-geranylgeranyl cysteine attachment occurs at residues Cys-215 and Cys-216.

It belongs to the small GTPase superfamily. Rab family.

The protein localises to the cell membrane. The sequence is that of Ras-related protein Rab11D (RAB11D) from Lotus japonicus (Lotus corniculatus var. japonicus).